Here is a 318-residue protein sequence, read N- to C-terminus: NAD kinase (318 aa).

Asp80 serves as the catalytic Proton acceptor. NAD(+) is bound by residues 80–81, Arg85, 155–156, Asp185, and 196–201; these read DG, NE, and TAYAFS.

It belongs to the NAD kinase family. Requires a divalent metal cation as cofactor.

It is found in the cytoplasm. The enzyme catalyses NAD(+) + ATP = ADP + NADP(+) + H(+). Involved in the regulation of the intracellular balance of NAD and NADP, and is a key enzyme in the biosynthesis of NADP. Catalyzes specifically the phosphorylation on 2'-hydroxyl of the adenosine moiety of NAD to yield NADP. This Corynebacterium efficiens (strain DSM 44549 / YS-314 / AJ 12310 / JCM 11189 / NBRC 100395) protein is NAD kinase.